The primary structure comprises 148 residues: MTAEETVEIFTDGACKGNPGPGGWGAILRLGPHEKELWGGEKETTNNRMELTAAIRAIEALKRPIGGKIYTDSQYVMKGINEWIHGWKKNGWKTSDKKPVKNADLWQLLDAQVKLHKLEWIWVRGHSGHPENERADALANRGIEELKG.

The RNase H type-1 domain occupies 3–144 (AEETVEIFTD…ADALANRGIE (142 aa)). D12, E50, D72, and D136 together coordinate Mg(2+). The interval 129-148 (HPENERADALANRGIEELKG) is disordered.

The protein belongs to the RNase H family. In terms of assembly, monomer. Mg(2+) is required as a cofactor.

It is found in the cytoplasm. It carries out the reaction Endonucleolytic cleavage to 5'-phosphomonoester.. Functionally, endonuclease that specifically degrades the RNA of RNA-DNA hybrids. The chain is Ribonuclease H from Dechloromonas aromatica (strain RCB).